Here is a 469-residue protein sequence, read N- to C-terminus: Keratin, type I cytoskeletal 16 (469 aa).

The tract at residues 1 to 20 (MATCSRQFTSSSSMKGSCGI) is disordered. The interval 1-112 (MATCSRQFTS…GIGDGLLVGS (112 aa)) is head. The segment at 113 to 148 (EKVTMQNLNDRLATYLDKVRALEEANRDLEVKIRDW) is coil 1A. The IF rod domain occupies 113 to 424 (EKVTMQNLND…RLLDGENIHS (312 aa)). The tract at residues 149–166 (YQRQRPTEIKDYSPYFKT) is linker 1. The interval 167-258 (IEDLKSKIII…KNHEEEMLAL (92 aa)) is coil 1B. Positions 259–281 (RGQTGGDVNVEMDAAPGVDLSRI) are linker 12. Positions 282-420 (LNEMRDQYEQ…ATYRRLLDGE (139 aa)) are coil 2. A tail region spans residues 421 to 469 (NIHSSSQHSSGQSYSSREVFSSSSRQPRSILKEQGSTSFSQSQSQSSRD). The interval 422-469 (IHSSSQHSSGQSYSSREVFSSSSRQPRSILKEQGSTSFSQSQSQSSRD) is disordered. 2 stretches are compositionally biased toward low complexity: residues 423-444 (HSSS…SSSS) and 454-469 (QGST…SSRD).

Belongs to the intermediate filament family. As to quaternary structure, heterodimer of a type I and a type II keratin. KRT16 associates with KRT6 isomers (KRT6A or KRT6B). Interacts with TCHP. Interacts with TRADD. Expressed in the epithelia of the tongue, upper and lower palate, footpad, proximal nail fold and nail bed, penile spine, sweat gland ducts, and back epidermis (at protein level). Expressed in upper suprabasal layers of the corneal epithelium (at protein level). Expressed in internal stratified epithelia in the esophagus and vagina (at protein level). Expressed in transitional stratified squamous epithelia in the forestomach, anal canal, and nasal cavity (at protein level). Expressed in transitional epithelia of the ureter, bladder and urethra (at protein level). In mature hair follicles, expressed in the companion layer of the outer root sheath during anagen and in the club hair sheath during catagen and telogen (at protein level).

In terms of biological role, epidermis-specific type I keratin that plays a key role in skin. Acts as a regulator of innate immunity in response to skin barrier breach: required for some inflammatory checkpoint for the skin barrier maintenance. This is Keratin, type I cytoskeletal 16 (Krt16) from Mus musculus (Mouse).